Consider the following 244-residue polypeptide: LOB domain-containing protein 17 (244 aa).

The LOB domain maps to 6-108; that stretch reads SPCGACKFLR…TQLEILKQQA (103 aa).

The protein belongs to the LOB domain-containing protein family. Expressed in roots, stems, leaves and flowers.

The chain is LOB domain-containing protein 17 (LBD17) from Arabidopsis thaliana (Mouse-ear cress).